Here is a 323-residue protein sequence, read N- to C-terminus: Beta-ketoacyl-[acyl-carrier-protein] synthase III (323 aa).

Active-site residues include cysteine 113 and histidine 250. The interval 251–255 (QANRR) is ACP-binding. The active site involves asparagine 280.

The protein belongs to the thiolase-like superfamily. FabH family. Homodimer.

The protein resides in the cytoplasm. It catalyses the reaction malonyl-[ACP] + acetyl-CoA + H(+) = 3-oxobutanoyl-[ACP] + CO2 + CoA. The protein operates within lipid metabolism; fatty acid biosynthesis. Catalyzes the condensation reaction of fatty acid synthesis by the addition to an acyl acceptor of two carbons from malonyl-ACP. Catalyzes the first condensation reaction which initiates fatty acid synthesis and may therefore play a role in governing the total rate of fatty acid production. Possesses both acetoacetyl-ACP synthase and acetyl transacylase activities. Its substrate specificity determines the biosynthesis of branched-chain and/or straight-chain of fatty acids. The protein is Beta-ketoacyl-[acyl-carrier-protein] synthase III of Rhizobium rhizogenes (strain K84 / ATCC BAA-868) (Agrobacterium radiobacter).